Consider the following 211-residue polypeptide: Thymidylate kinase (211 aa).

Residue 11-18 (GPDGAGKT) coordinates ATP.

Belongs to the thymidylate kinase family.

The enzyme catalyses dTMP + ATP = dTDP + ADP. Its function is as follows. Phosphorylation of dTMP to form dTDP in both de novo and salvage pathways of dTTP synthesis. The polypeptide is Thymidylate kinase (Streptococcus equi subsp. zooepidemicus (strain H70)).